Here is a 781-residue protein sequence, read N- to C-terminus: Translation initiation factor IF-2 (781 aa).

Residues 44-195 (RQLDNAVDGT…TPPKPKELPE (152 aa)) are disordered. Residues 53–65 (TNKKAEAPKKETT) show a composition bias toward basic and acidic residues. Residues 66-81 (SNENGNSKGPNKPNMT) show a composition bias toward polar residues. Over residues 82–93 (NSNEKSNKPNKP) the composition is skewed to low complexity. Residues 115 to 126 (KPANTGNQTQAS) show a composition bias toward polar residues. Residues 127-169 (GNQQAGGQKRNNNNNSNRPGGGNPNRPGGNNRPNRGGNFNNKG) show a composition bias toward low complexity. The region spanning 282–451 (ERPPVVTIMG…LLVSEVEELK (170 aa)) is the tr-type G domain. The G1 stretch occupies residues 291 to 298 (GHVDHGKT). 291 to 298 (GHVDHGKT) contacts GTP. A G2 region spans residues 316-320 (GITQH). Residues 337-340 (DTPG) are G3. GTP-binding positions include 337–341 (DTPGH) and 391–394 (NKID). The G4 stretch occupies residues 391-394 (NKID). Positions 427-429 (SAK) are G5.

Belongs to the TRAFAC class translation factor GTPase superfamily. Classic translation factor GTPase family. IF-2 subfamily.

It is found in the cytoplasm. One of the essential components for the initiation of protein synthesis. Protects formylmethionyl-tRNA from spontaneous hydrolysis and promotes its binding to the 30S ribosomal subunits. Also involved in the hydrolysis of GTP during the formation of the 70S ribosomal complex. The protein is Translation initiation factor IF-2 of Listeria monocytogenes serotype 4a (strain HCC23).